A 67-amino-acid chain; its full sequence is Large ribosomal subunit protein uL29 (67 aa).

Belongs to the universal ribosomal protein uL29 family.

This chain is Large ribosomal subunit protein uL29, found in Wolbachia pipientis subsp. Culex pipiens (strain wPip).